Reading from the N-terminus, the 295-residue chain is MSHYKTGHKQPRFRYSVLARCVAWANISVQVLFPLAVTFTPVMAARAQHAVQPRLSMGNTTVTADNNVEKNVASFAANAGTFLSSQPDSDATRNFITGMATAKANQEIQEWLGKYGTARVKLNVDKDFSLKDSSLEMLYPIYDTPTNMLFTQGAIHRTDDRTQSNIGFGWRHFSGNDWMAGVNTFIDHDLSRSHTRIGVGAEYWRDYLKLSANGYIRASGWKKSPDIEDYQERPANGWDIRAEGYLPAWPQLGASLMYEQYYGDEVGLFGKDKRQKDPHAISAEVTYTPVPLTQQ.

Residues M1 to A25 form the signal peptide.

This sequence belongs to the intimin/invasin family.

The polypeptide is Putative attaching and effacing protein homolog (eaeH) (Escherichia coli (strain K12)).